Consider the following 160-residue polypeptide: Putative lipoprotein YfiB (160 aa).

The first 18 residues, M1–G18, serve as a signal peptide directing secretion. A lipid anchor (N-palmitoyl cysteine) is attached at C19. A lipid anchor (S-diacylglycerol cysteine) is attached at C19. Residues A43–P160 enclose the OmpA-like domain.

This sequence belongs to the outer membrane OOP (TC 1.B.6) superfamily.

Its subcellular location is the cell membrane. This Escherichia coli (strain K12) protein is Putative lipoprotein YfiB (yfiB).